Consider the following 259-residue polypeptide: Pre-mRNA-splicing factor CWC24 (259 aa).

Positions 1–67 are disordered; it reads MFRKRLVNKS…HENEGKLQKK (67 aa). Residues 25–39 show a composition bias toward basic and acidic residues; the sequence is FSEEKLVASDEEKGS. Ser-33 carries the post-translational modification Phosphoserine. A compositionally biased stretch (polar residues) spans 47–57; the sequence is KSGNSRTLQLS. Positions 58 to 67 are enriched in basic and acidic residues; it reads HENEGKLQKK. A Phosphoserine modification is found at Ser-105. The C3H1-type zinc finger occupies 138-166; the sequence is DFQPDVCKDYKQTGYCGYGDSCKFLHSRD. An RING-type zinc finger spans residues 199–237; that stretch reads CTLCKEDYKSPVVTNCGHYFCGSCFAKDMKKGTKCFICH.

Belongs to the CWC24 family. In terms of assembly, belongs to the CWC complex (or CEF1-associated complex), a spliceosome sub-complex reminiscent of a late-stage spliceosome composed of the U2, U5 and U6 snRNAs and at least BUD13, BUD31, BRR2, CDC40, CEF1, CLF1, CUS1, CWC2, CWC15, CWC21, CWC22, CWC23, CWC24, CWC25, CWC27, ECM2, HSH155, IST3, ISY1, LEA1, MSL1, NTC20, PRP8, PRP9, PRP11, PRP19, PRP21, PRP22, PRP45, PRP46, SLU7, SMB1, SMD1, SMD2, SMD3, SMX2, SMX3, SNT309, SNU114, SPP2, SYF1, SYF2, RSE1 and YJU2.

The protein resides in the nucleus. Functionally, involved in pre-mRNA splicing. This chain is Pre-mRNA-splicing factor CWC24 (CWC24), found in Saccharomyces cerevisiae (strain ATCC 204508 / S288c) (Baker's yeast).